We begin with the raw amino-acid sequence, 424 residues long: GTPase Obg (424 aa).

In terms of domain architecture, Obg spans 1 to 158 (MFIDTAKIFV…RWIKLELKLL (158 aa)). The region spanning 159–331 (ADVGLIGFPN…LMKEAARLLS (173 aa)) is the OBG-type G domain. GTP-binding positions include 165-172 (GFPNVGKS), 190-194 (FTTLK), 212-215 (DIPG), 282-285 (NKSD), and 312-314 (SAA). Mg(2+) contacts are provided by Ser172 and Thr192. Residues 345–424 (RFIEEEKRFT…LNDFEFDFLL (80 aa)) form the OCT domain.

The protein belongs to the TRAFAC class OBG-HflX-like GTPase superfamily. OBG GTPase family. Monomer. Mg(2+) is required as a cofactor.

It is found in the cytoplasm. Its function is as follows. An essential GTPase which binds GTP, GDP and possibly (p)ppGpp with moderate affinity, with high nucleotide exchange rates and a fairly low GTP hydrolysis rate. Plays a role in control of the cell cycle, stress response, ribosome biogenesis and in those bacteria that undergo differentiation, in morphogenesis control. In Clostridium botulinum (strain Langeland / NCTC 10281 / Type F), this protein is GTPase Obg.